Consider the following 139-residue polypeptide: Acidic phospholipase A2 DE-I (139 aa).

Positions 1–16 are cleaved as a signal peptide; the sequence is MRTLWIMAVLLLGVEG. Cystine bridges form between cysteine 42/cysteine 132, cysteine 44/cysteine 60, cysteine 59/cysteine 111, cysteine 65/cysteine 139, cysteine 66/cysteine 104, cysteine 73/cysteine 97, and cysteine 91/cysteine 102. Ca(2+) is bound by residues tyrosine 43, glycine 45, and glycine 47. Histidine 63 is an active-site residue. Aspartate 64 is a binding site for Ca(2+). Aspartate 105 is a catalytic residue.

It depends on Ca(2+) as a cofactor. As to expression, expressed by the venom gland.

It is found in the secreted. It catalyses the reaction a 1,2-diacyl-sn-glycero-3-phosphocholine + H2O = a 1-acyl-sn-glycero-3-phosphocholine + a fatty acid + H(+). Snake venom phospholipase A2 (PLA2) that inhibits the ADP- and collagen-induced human platelet aggregation. Exhibits high hydrolytic activities and preferred the anionic micelles to the zwitterionic micelles. PLA2 catalyzes the calcium-dependent hydrolysis of the 2-acyl groups in 3-sn-phosphoglycerides. The chain is Acidic phospholipase A2 DE-I from Ovophis okinavensis (Ryukyu Island pit viper).